We begin with the raw amino-acid sequence, 218 residues long: Capsid protein (218 aa).

N-acetylmethionine; by host is present on methionine 1. Positions 1–10 (MDKSESTSAG) are enriched in low complexity. The segment at 1–30 (MDKSESTSAGRNRRRRLRRGSRSASSSSDA) is disordered. Residues 11–21 (RNRRRRLRRGS) are compositionally biased toward basic residues.

This sequence belongs to the cucumovirus capsid protein family.

The protein resides in the virion. Its function is as follows. Capsid protein. Probably binds RNA and plays a role in packaging. This Cucumber mosaic virus (strain Y) (CMV) protein is Capsid protein.